Reading from the N-terminus, the 384-residue chain is Chaperone protein DnaJ (384 aa).

In terms of domain architecture, J spans 5–69 (DYYKVLGVDR…QKRAQYDQFG (65 aa)). Residues 141–223 (GKKTQVSYTR…CGGKGTVERK (83 aa)) form a CR-type zinc finger. Residues Cys154, Cys157, Cys171, Cys174, Cys197, Cys200, Cys211, and Cys214 each contribute to the Zn(2+) site. CXXCXGXG motif repeat units lie at residues 154–161 (CETCGGNG), 171–178 (CDKCHGTG), 197–204 (CDKCNGRG), and 211–218 (CKTCGGKG).

Belongs to the DnaJ family. In terms of assembly, homodimer. It depends on Zn(2+) as a cofactor.

The protein localises to the cytoplasm. Its function is as follows. Participates actively in the response to hyperosmotic and heat shock by preventing the aggregation of stress-denatured proteins and by disaggregating proteins, also in an autonomous, DnaK-independent fashion. Unfolded proteins bind initially to DnaJ; upon interaction with the DnaJ-bound protein, DnaK hydrolyzes its bound ATP, resulting in the formation of a stable complex. GrpE releases ADP from DnaK; ATP binding to DnaK triggers the release of the substrate protein, thus completing the reaction cycle. Several rounds of ATP-dependent interactions between DnaJ, DnaK and GrpE are required for fully efficient folding. Also involved, together with DnaK and GrpE, in the DNA replication of plasmids through activation of initiation proteins. The chain is Chaperone protein DnaJ from Lactobacillus acidophilus (strain ATCC 700396 / NCK56 / N2 / NCFM).